A 339-amino-acid polypeptide reads, in one-letter code: DNA-directed RNA polymerase subunit alpha (339 aa).

The tract at residues 1–235 is alpha N-terminal domain (alpha-NTD); it reads MTIQKNWQEL…DQLNVFVNFE (235 aa). An alpha C-terminal domain (alpha-CTD) region spans residues 251 to 339; it reads FNPAFLKKVD…ELAKRFEDHY (89 aa).

This sequence belongs to the RNA polymerase alpha chain family. Homodimer. The RNAP catalytic core consists of 2 alpha, 1 beta, 1 beta' and 1 omega subunit. When a sigma factor is associated with the core the holoenzyme is formed, which can initiate transcription.

The catalysed reaction is RNA(n) + a ribonucleoside 5'-triphosphate = RNA(n+1) + diphosphate. DNA-dependent RNA polymerase catalyzes the transcription of DNA into RNA using the four ribonucleoside triphosphates as substrates. This chain is DNA-directed RNA polymerase subunit alpha, found in Nitrobacter winogradskyi (strain ATCC 25391 / DSM 10237 / CIP 104748 / NCIMB 11846 / Nb-255).